The primary structure comprises 146 residues: Horcolin (146 aa).

The interval 1 to 21 (MSKPVKIGPWGGNGGSERDVQ) is disordered. A Jacalin-type lectin domain is found at 4-146 (PVKIGPWGGN…LDAIGFYITP (143 aa)).

The protein belongs to the jacalin lectin family.

It is found in the secreted. Its subcellular location is the extracellular space. The protein localises to the apoplast. Functionally, mannose-specific lectin. Has a weak agglutinating activity against rabbit erythrocytes. This Hordeum vulgare (Barley) protein is Horcolin.